The sequence spans 236 residues: Leucyl/phenylalanyl-tRNA--protein transferase (236 aa).

Belongs to the L/F-transferase family.

It is found in the cytoplasm. It carries out the reaction N-terminal L-lysyl-[protein] + L-leucyl-tRNA(Leu) = N-terminal L-leucyl-L-lysyl-[protein] + tRNA(Leu) + H(+). The catalysed reaction is N-terminal L-arginyl-[protein] + L-leucyl-tRNA(Leu) = N-terminal L-leucyl-L-arginyl-[protein] + tRNA(Leu) + H(+). It catalyses the reaction L-phenylalanyl-tRNA(Phe) + an N-terminal L-alpha-aminoacyl-[protein] = an N-terminal L-phenylalanyl-L-alpha-aminoacyl-[protein] + tRNA(Phe). Functionally, functions in the N-end rule pathway of protein degradation where it conjugates Leu, Phe and, less efficiently, Met from aminoacyl-tRNAs to the N-termini of proteins containing an N-terminal arginine or lysine. This Vibrio parahaemolyticus serotype O3:K6 (strain RIMD 2210633) protein is Leucyl/phenylalanyl-tRNA--protein transferase.